We begin with the raw amino-acid sequence, 1189 residues long: Increased DNA methylation 1 (1189 aa).

Disordered stretches follow at residues 475-498 (KNLHRRSKKISDIKPASLDQHDSL) and 523-597 (SRDE…CRLL). The segment covering 523–532 (SRDERLRNEK) has biased composition (basic and acidic residues). 2 stretches are compositionally biased toward basic residues: residues 541–550 (KKGRKKARKH) and 565–590 (NKGKFSRSSQKKKTQKPKARTKKRNN). A PHD-type 1 zinc finger spans residues 726–771 (DDSCGVCGDGGELICCDNCPSTFHQACLSMQVLPEGSWYCSSCTCW). Residues 767–823 (SCTCWICSELVSDNAERSQDFKCSQCAHKYHGTCLQGISKRRKLFPETYFCGKNCEK) form a PHD-type 2; degenerate zinc finger. The 146-residue stretch at 879–1024 (MEESFLSMVD…GTTLLKKTLY (146 aa)) folds into the N-acetyltransferase domain. A disordered region spans residues 1031-1157 (TMKGVCLSKE…SSSSAALEEV (127 aa)). Composition is skewed to basic and acidic residues over residues 1038–1050 (SKERNNPSNKEAD), 1102–1114 (NPSRDSNANDRPN), and 1129–1145 (CLQKDVSKLSEEGKETT). Residues 1147–1157 (ASSSSAALEEV) show a composition bias toward low complexity.

Interacts (via N-terminus) with IDM2. Interacts with IMD3. Part of a complex made of MBD7, IDM1, IDM2 and IDM3. As to expression, expressed in cotyledons and hypocotyls in young seedlings.

It is found in the nucleus. Its function is as follows. Histone H3 acetyltransferase that binds methylated DNA at chromatin sites lacking histone H3K4 di- or trimethylation and catalyzes H3K18 and H3K23 acetylation. Prevents the transcriptional silencing of transgenes and of some endogenous genes. Requires the presence of IDM2 for efficient H3K18 acetylation, but not for H3K23 acetylation. This Arabidopsis thaliana (Mouse-ear cress) protein is Increased DNA methylation 1.